Consider the following 362-residue polypeptide: Molybdenum import ATP-binding protein ModC (362 aa).

Residues 4-238 (AGEAAIRARF…LDLPIRLGED (235 aa)) form the ABC transporter domain. 38–45 (GHSGSGKT) serves as a coordination point for ATP. The Mop domain maps to 297–362 (GTSILNTLPA…AQIKAVALVG (66 aa)).

It belongs to the ABC transporter superfamily. Molybdate importer (TC 3.A.1.8) family. In terms of assembly, the complex is composed of two ATP-binding proteins (ModC), two transmembrane proteins (ModB) and a solute-binding protein (ModA).

It localises to the cell inner membrane. The catalysed reaction is molybdate(out) + ATP + H2O = molybdate(in) + ADP + phosphate + H(+). In terms of biological role, part of the ABC transporter complex ModABC involved in molybdenum import. Responsible for energy coupling to the transport system. This is Molybdenum import ATP-binding protein ModC from Thiobacillus denitrificans (strain ATCC 25259 / T1).